Reading from the N-terminus, the 208-residue chain is UPF0316 protein SERP1448 (208 aa).

3 consecutive transmembrane segments (helical) span residues 8-28 (PWLM…FLTM), 40-60 (VAAV…GLVM), and 66-86 (IQNI…GMKI).

This sequence belongs to the UPF0316 family.

It localises to the cell membrane. In Staphylococcus epidermidis (strain ATCC 35984 / DSM 28319 / BCRC 17069 / CCUG 31568 / BM 3577 / RP62A), this protein is UPF0316 protein SERP1448.